Here is a 251-residue protein sequence, read N- to C-terminus: 3-deoxy-manno-octulosonate cytidylyltransferase (251 aa).

The protein belongs to the KdsB family.

The protein localises to the cytoplasm. It catalyses the reaction 3-deoxy-alpha-D-manno-oct-2-ulosonate + CTP = CMP-3-deoxy-beta-D-manno-octulosonate + diphosphate. The protein operates within nucleotide-sugar biosynthesis; CMP-3-deoxy-D-manno-octulosonate biosynthesis; CMP-3-deoxy-D-manno-octulosonate from 3-deoxy-D-manno-octulosonate and CTP: step 1/1. Its pathway is bacterial outer membrane biogenesis; lipopolysaccharide biosynthesis. Its function is as follows. Activates KDO (a required 8-carbon sugar) for incorporation into bacterial lipopolysaccharide in Gram-negative bacteria. This Vibrio vulnificus (strain CMCP6) protein is 3-deoxy-manno-octulosonate cytidylyltransferase.